Consider the following 169-residue polypeptide: S-ribosylhomocysteine lyase (169 aa).

Fe cation-binding residues include histidine 54, histidine 58, and cysteine 128.

Belongs to the LuxS family. In terms of assembly, homodimer. Requires Fe cation as cofactor.

It carries out the reaction S-(5-deoxy-D-ribos-5-yl)-L-homocysteine = (S)-4,5-dihydroxypentane-2,3-dione + L-homocysteine. Functionally, involved in the synthesis of autoinducer 2 (AI-2) which is secreted by bacteria and is used to communicate both the cell density and the metabolic potential of the environment. The regulation of gene expression in response to changes in cell density is called quorum sensing. Catalyzes the transformation of S-ribosylhomocysteine (RHC) to homocysteine (HC) and 4,5-dihydroxy-2,3-pentadione (DPD). This Shewanella amazonensis (strain ATCC BAA-1098 / SB2B) protein is S-ribosylhomocysteine lyase.